The primary structure comprises 374 residues: PqqA peptide cyclase (374 aa).

Positions 7-222 (VTPPLWLLAE…VADYRQRMGA (216 aa)) constitute a Radical SAM core domain. [4Fe-4S] cluster is bound by residues Cys21, Cys25, and Cys28.

This sequence belongs to the radical SAM superfamily. PqqE family. As to quaternary structure, interacts with PqqD. The interaction is necessary for activity of PqqE. [4Fe-4S] cluster serves as cofactor.

It catalyses the reaction [PQQ precursor protein] + S-adenosyl-L-methionine = E-Y cross-linked-[PQQ precursor protein] + 5'-deoxyadenosine + L-methionine + H(+). It functions in the pathway cofactor biosynthesis; pyrroloquinoline quinone biosynthesis. Catalyzes the cross-linking of a glutamate residue and a tyrosine residue in the PqqA protein as part of the biosynthesis of pyrroloquinoline quinone (PQQ). The chain is PqqA peptide cyclase from Kluyvera intermedia (Enterobacter intermedius).